Here is a 453-residue protein sequence, read N- to C-terminus: Bis(5'-adenosyl)-triphosphatase ENPP4 (453 aa).

Positions 1–15 (MKLLVILLFSGLITG) are cleaved as a signal peptide. Residues 16–407 (FRSDSSSSLP…DQWCINLPEA (392 aa)) lie on the Extracellular side of the membrane. 2 residues coordinate Zn(2+): D34 and T70. T70 serves as the catalytic AMP-threonine intermediate. The substrate site is built by N91 and Y154. N155 and N166 each carry an N-linked (GlcNAc...) asparagine glycan. Positions 189, 193, 237, and 238 each coordinate Zn(2+). D189 lines the substrate pocket. Cysteines 254 and 287 form a disulfide. Residue N276 is glycosylated (N-linked (GlcNAc...) asparagine). H336 lines the Zn(2+) pocket. N386 carries an N-linked (GlcNAc...) asparagine glycan. A disulfide bridge connects residues C394 and C401. Residues 408 to 428 (IAIVIGSLLVLTMLTCLIIIM) form a helical membrane-spanning segment. The Cytoplasmic segment spans residues 429 to 453 (QNRLSVPRPFSRLQLQEDDDDPLIG).

This sequence belongs to the nucleotide pyrophosphatase/phosphodiesterase family. The cofactor is Zn(2+). In terms of tissue distribution, expressed on the surface of vascular endothelia.

It is found in the cell membrane. The catalysed reaction is P(1),P(3)-bis(5'-adenosyl) triphosphate + H2O = AMP + ADP + 2 H(+). In terms of biological role, hydrolyzes extracellular Ap3A into AMP and ADP, and Ap4A into AMP and ATP. Ap3A and Ap4A are diadenosine polyphosphates thought to induce proliferation of vascular smooth muscle cells. Acts as a procoagulant, mediating platelet aggregation at the site of nascent thrombus via release of ADP from Ap3A and activation of ADP receptors. The sequence is that of Bis(5'-adenosyl)-triphosphatase ENPP4 (ENPP4) from Homo sapiens (Human).